Reading from the N-terminus, the 311-residue chain is Meiotically up-regulated gene 146 protein (311 aa).

It is found in the cytoplasm. The protein localises to the nucleus. Functionally, has a role in sporulation. This chain is Meiotically up-regulated gene 146 protein (mug146), found in Schizosaccharomyces pombe (strain 972 / ATCC 24843) (Fission yeast).